The sequence spans 660 residues: Bifunctional polymyxin resistance protein ArnA (660 aa).

Residues methionine 1–leucine 304 form a formyltransferase ArnAFT region. The active-site Proton donor; for formyltransferase activity is the histidine 104. (6R)-10-formyltetrahydrofolate-binding positions include arginine 114 and valine 136–aspartate 140. Residues arginine 314–serine 660 form a dehydrogenase ArnADH region. NAD(+)-binding positions include aspartate 347 and aspartate 368–isoleucine 369. UDP-alpha-D-glucuronate-binding positions include alanine 393, tyrosine 398, and threonine 432–serine 433. Glutamate 434 (proton acceptor; for decarboxylase activity) is an active-site residue. UDP-alpha-D-glucuronate-binding positions include arginine 460, asparagine 492, lysine 526–arginine 535, and tyrosine 613. Catalysis depends on arginine 619, which acts as the Proton donor; for decarboxylase activity.

In the N-terminal section; belongs to the Fmt family. UDP-L-Ara4N formyltransferase subfamily. This sequence in the C-terminal section; belongs to the NAD(P)-dependent epimerase/dehydratase family. UDP-glucuronic acid decarboxylase subfamily. Homohexamer, formed by a dimer of trimers.

The catalysed reaction is UDP-alpha-D-glucuronate + NAD(+) = UDP-beta-L-threo-pentopyranos-4-ulose + CO2 + NADH. It carries out the reaction UDP-4-amino-4-deoxy-beta-L-arabinose + (6R)-10-formyltetrahydrofolate = UDP-4-deoxy-4-formamido-beta-L-arabinose + (6S)-5,6,7,8-tetrahydrofolate + H(+). The protein operates within nucleotide-sugar biosynthesis; UDP-4-deoxy-4-formamido-beta-L-arabinose biosynthesis; UDP-4-deoxy-4-formamido-beta-L-arabinose from UDP-alpha-D-glucuronate: step 1/3. It participates in nucleotide-sugar biosynthesis; UDP-4-deoxy-4-formamido-beta-L-arabinose biosynthesis; UDP-4-deoxy-4-formamido-beta-L-arabinose from UDP-alpha-D-glucuronate: step 3/3. It functions in the pathway bacterial outer membrane biogenesis; lipopolysaccharide biosynthesis. Its function is as follows. Bifunctional enzyme that catalyzes the oxidative decarboxylation of UDP-glucuronic acid (UDP-GlcUA) to UDP-4-keto-arabinose (UDP-Ara4O) and the addition of a formyl group to UDP-4-amino-4-deoxy-L-arabinose (UDP-L-Ara4N) to form UDP-L-4-formamido-arabinose (UDP-L-Ara4FN). The modified arabinose is attached to lipid A and is required for resistance to polymyxin and cationic antimicrobial peptides. The sequence is that of Bifunctional polymyxin resistance protein ArnA from Salmonella heidelberg (strain SL476).